Here is a 299-residue protein sequence, read N- to C-terminus: uncharacterized protein (299 aa).

Catalysis depends on charge relay system residues Thr-47 and Tyr-109. Residue Tyr-138 is the Proton donor of the active site. Residue Lys-168 is the Schiff-base intermediate with substrate of the active site.

Belongs to the DapA family. In terms of assembly, homotetramer.

The protein localises to the cytoplasm. This is an uncharacterized protein from Chloroflexus aurantiacus (strain ATCC 29366 / DSM 635 / J-10-fl).